Reading from the N-terminus, the 246-residue chain is tRNA pseudouridine synthase A (246 aa).

Asp-52 acts as the Nucleophile in catalysis. A substrate-binding site is contributed by Tyr-111.

It belongs to the tRNA pseudouridine synthase TruA family. In terms of assembly, homodimer.

The catalysed reaction is uridine(38/39/40) in tRNA = pseudouridine(38/39/40) in tRNA. Its function is as follows. Formation of pseudouridine at positions 38, 39 and 40 in the anticodon stem and loop of transfer RNAs. The sequence is that of tRNA pseudouridine synthase A from Parvibaculum lavamentivorans (strain DS-1 / DSM 13023 / NCIMB 13966).